We begin with the raw amino-acid sequence, 487 residues long: UDP-N-acetylmuramoyl-L-alanyl-D-glutamate--2,6-diaminopimelate ligase (487 aa).

UDP-N-acetyl-alpha-D-muramoyl-L-alanyl-D-glutamate contacts are provided by leucine 23 and serine 25. ATP is bound at residue 108-114 (GTNGKTS). UDP-N-acetyl-alpha-D-muramoyl-L-alanyl-D-glutamate is bound by residues 150 to 151 (TT), serine 177, glutamine 183, and arginine 185. N6-carboxylysine is present on lysine 217. Meso-2,6-diaminopimelate is bound by residues arginine 378, 402–405 (DNPR), glycine 453, and glutamate 457. Positions 402 to 405 (DNPR) match the Meso-diaminopimelate recognition motif motif.

Belongs to the MurCDEF family. MurE subfamily. Mg(2+) is required as a cofactor. In terms of processing, carboxylation is probably crucial for Mg(2+) binding and, consequently, for the gamma-phosphate positioning of ATP.

It localises to the cytoplasm. The enzyme catalyses UDP-N-acetyl-alpha-D-muramoyl-L-alanyl-D-glutamate + meso-2,6-diaminopimelate + ATP = UDP-N-acetyl-alpha-D-muramoyl-L-alanyl-gamma-D-glutamyl-meso-2,6-diaminopimelate + ADP + phosphate + H(+). Its pathway is cell wall biogenesis; peptidoglycan biosynthesis. Functionally, catalyzes the addition of meso-diaminopimelic acid to the nucleotide precursor UDP-N-acetylmuramoyl-L-alanyl-D-glutamate (UMAG) in the biosynthesis of bacterial cell-wall peptidoglycan. This is UDP-N-acetylmuramoyl-L-alanyl-D-glutamate--2,6-diaminopimelate ligase from Pseudomonas aeruginosa (strain ATCC 15692 / DSM 22644 / CIP 104116 / JCM 14847 / LMG 12228 / 1C / PRS 101 / PAO1).